Reading from the N-terminus, the 531-residue chain is DNA damage-binding protein cmr1 (531 aa).

Disordered regions lie at residues Gly-37–Ala-83 and Asp-218–His-264. A compositionally biased stretch (basic residues) spans Lys-53–Lys-64. A WD 1 repeat occupies Val-186–Ser-227. A compositionally biased stretch (acidic residues) spans Gly-233–Asp-245. 6 WD repeats span residues Pro-253–Thr-293, Ser-300–Val-340, Leu-345–Pro-385, Leu-392–Glu-431, Gly-454–Leu-497, and Asp-500–Met-531.

This sequence belongs to the WD repeat DDB2/WDR76 family.

Functionally, DNA-binding protein that binds to both single- and double-stranded DNA. Binds preferentially to UV-damaged DNA. May be involved in DNA-metabolic processes. In Aspergillus clavatus (strain ATCC 1007 / CBS 513.65 / DSM 816 / NCTC 3887 / NRRL 1 / QM 1276 / 107), this protein is DNA damage-binding protein cmr1.